A 187-amino-acid polypeptide reads, in one-letter code: MATTNDIKNGTVLKLEGQLWNIIEFQHVKPGKGGAFVRTKMRNVMSGKVVDKTFNAGLKIETATVDRRDYQYLYQDGEDFVFMDTQDYDQITVSGATVGDATNFMLENQMVNIAIHEGTPLYIELPPSVVLEITYTEPGLQGDRSSAGTKPATVETGYEIQVPLFVEQGTKVKVDTRDGSYLGRVND.

This sequence belongs to the elongation factor P family.

Its subcellular location is the cytoplasm. It participates in protein biosynthesis; polypeptide chain elongation. Its function is as follows. Involved in peptide bond synthesis. Stimulates efficient translation and peptide-bond synthesis on native or reconstituted 70S ribosomes in vitro. Probably functions indirectly by altering the affinity of the ribosome for aminoacyl-tRNA, thus increasing their reactivity as acceptors for peptidyl transferase. This Paenarthrobacter aurescens (strain TC1) protein is Elongation factor P.